The primary structure comprises 1212 residues: Metabotropic glutamate receptor 5 (1212 aa).

The signal sequence occupies residues 1 to 20; sequence MVLLLILSVLLLKEDVRGSA. The Extracellular portion of the chain corresponds to 22–580; the sequence is SSERRVVAHM…QYLRWGDPEP (559 aa). The cysteines at positions 57 and 99 are disulfide-linked. L-glutamate is bound at residue Tyr64. Residue Asn88 is glycosylated (N-linked (GlcNAc...) asparagine). L-glutamate-binding positions include Ser152 and 173–175; that span reads SAT. Residue Asn210 is glycosylated (N-linked (GlcNAc...) asparagine). Tyr223 contributes to the L-glutamate binding site. 8 cysteine pairs are disulfide-bonded: Cys241–Cys530, Cys276–Cys278, Cys365–Cys381, Cys419–Cys426, Cys511–Cys531, Cys515–Cys534, Cys537–Cys549, and Cys552–Cys565. Residue Asp305 participates in L-glutamate binding. N-linked (GlcNAc...) asparagine glycosylation is found at Asn378 and Asn382. Lys396 contacts L-glutamate. Asn445 carries N-linked (GlcNAc...) asparagine glycosylation. A helical transmembrane segment spans residues 581–603; sequence IAAVVFACLGLLATLFVTVVFII. The Cytoplasmic portion of the chain corresponds to 604 to 613; the sequence is YRDTPVVKSS. The chain crosses the membrane as a helical span at residues 614 to 636; sequence SRELCYIILAGICLGYLCTFCLI. Residues 637-644 are Extracellular-facing; the sequence is AKPKQIYC. A disulfide bridge connects residues Cys644 and Cys733. Residues 645 to 667 form a helical membrane-spanning segment; it reads YLQRIGIGLSPAMSYSALVTKTN. Residues 668–693 lie on the Cytoplasmic side of the membrane; it reads RIARILAGSKKKICTKKPRFMSACAQ. A helical transmembrane segment spans residues 694-714; that stretch reads LVIAFILICIQLGIIVALFIM. Residues 715-737 are Extracellular-facing; sequence EPPDIMHDYPSIREVYLICNTTN. Asn734 carries N-linked (GlcNAc...) asparagine glycosylation. A helical membrane pass occupies residues 738–759; that stretch reads LGVVTPLGYNGLLILSCTFYAF. Residues 760-772 lie on the Cytoplasmic side of the membrane; sequence KTRNVPANFNEAK. The helical transmembrane segment at 773 to 795 threads the bilayer; sequence YIAFTMYTTCIIWLAFVPIYFGS. Residues 796–798 are Extracellular-facing; sequence NYK. A helical transmembrane segment spans residues 799–820; the sequence is IITMCFSVSLSATVALGCMFVP. Residues 821–1212 are Cytoplasmic-facing; sequence KVYIILAKPE…RDYTQSSSSL (392 aa). Ser861 is modified (phosphoserine). Arg869 and Arg925 each carry omega-N-methylarginine. Disordered regions lie at residues 937–971, 1010–1056, and 1132–1191; these read INKK…GGSA, FPAP…SQGS, and GAQA…ALCI. Gly residues predominate over residues 961–971; it reads LGAGAGAGGSA. Residues Ser1018 and Ser1020 each carry the phosphoserine modification. Residues 1132-1153 show a composition bias toward low complexity; the sequence is GAQAAGDAARESPAAGPEAAAA. Residues 1174–1185 show a composition bias toward polar residues; the sequence is DSGSTTPNSPVS.

This sequence belongs to the G-protein coupled receptor 3 family. As to quaternary structure, the PPXXF motif binds HOMER1, HOMER2 and HOMER3. Interacts with SIAH1, RYR1, RYR2, ITPR1, SHANK1, SHANK3 and TAMALIN. Interacts with NCDN. Isoform 2 interacts with NECAB2. Interacts with CAMK2A.

Its subcellular location is the cell membrane. Functionally, G-protein coupled receptor for glutamate. Ligand binding causes a conformation change that triggers signaling via guanine nucleotide-binding proteins (G proteins) and modulates the activity of down-stream effectors. Signaling activates a phosphatidylinositol-calcium second messenger system and generates a calcium-activated chloride current. Plays an important role in the regulation of synaptic plasticity and the modulation of the neural network activity. This is Metabotropic glutamate receptor 5 (GRM5) from Homo sapiens (Human).